The chain runs to 568 residues: General O-oligosaccharyltransferase (568 aa).

12 helical membrane-spanning segments follow: residues 17–37 (VAVM…LAWL), 46–66 (LTFA…ALFL), 78–98 (LALP…VVDF), 101–121 (ALLS…GYNL), 132–152 (FTLS…IACI), 176–196 (FAQP…CLYL), 214–234 (IVFA…LFFI), 251–271 (YAVL…PRFT), 349–369 (LLVW…LIWI), 376–396 (AKTT…IHTL), 397–417 (LEYP…MGLI), and 429–449 (VPVS…ALIW).

It belongs to the PglL O-oligosaccharyltransferase family.

It localises to the cell membrane. Its function is as follows. Catalyzes the O-glycosylation of multiple protein targets. Is responsible for general protein glycosylation within A.baylyi ADP1. Does not act as an O-antigen ligase. In Acinetobacter baylyi (strain ATCC 33305 / BD413 / ADP1), this protein is General O-oligosaccharyltransferase.